A 287-amino-acid polypeptide reads, in one-letter code: Elongation factor Ts (287 aa).

The interval 77-80 (TDFV) is involved in Mg(2+) ion dislocation from EF-Tu.

The protein belongs to the EF-Ts family.

It is found in the cytoplasm. Associates with the EF-Tu.GDP complex and induces the exchange of GDP to GTP. It remains bound to the aminoacyl-tRNA.EF-Tu.GTP complex up to the GTP hydrolysis stage on the ribosome. This chain is Elongation factor Ts, found in Wolbachia sp. subsp. Brugia malayi (strain TRS).